Here is a 250-residue protein sequence, read N- to C-terminus: Anamorsin homolog 2 (250 aa).

The interval 1–102 is N-terminal SAM-like domain; it reads MNLKITINQQ…QTKKINIPQQ (102 aa). The tract at residues 102–149 is linker; sequence QDFNNCYGKYDYIEQKFQNQINFFKQVDLKGNQETIDENELLNDGVEV. The [2Fe-2S] cluster site is built by Cys-155, Cys-162, Cys-165, and Cys-167. A fe-S binding site A region spans residues 155 to 167; sequence CASKPRACANCTC. 4 residues coordinate [4Fe-4S] cluster: Cys-193, Cys-196, Cys-204, and Cys-207. 2 consecutive short sequence motifs (cx2C motif) follow at residues 193 to 196 and 204 to 207; these read CGSC and CANC. Positions 193–207 are fe-S binding site B; sequence CGSCYLGDAFRCANC.

This sequence belongs to the anamorsin family. As to quaternary structure, monomer. [2Fe-2S] cluster serves as cofactor. The cofactor is [4Fe-4S] cluster.

The protein resides in the cytoplasm. It localises to the mitochondrion intermembrane space. Component of the cytosolic iron-sulfur (Fe-S) protein assembly (CIA) machinery. Required for the maturation of extramitochondrial Fe-S proteins. Part of an electron transfer chain functioning in an early step of cytosolic Fe-S biogenesis, facilitating the de novo assembly of a [4Fe-4S] cluster on the cytosolic Fe-S scaffold complex. Electrons are transferred from NADPH via a FAD- and FMN-containing diflavin oxidoreductase. Together with the diflavin oxidoreductase, also required for the assembly of the diferric tyrosyl radical cofactor of ribonucleotide reductase (RNR), probably by providing electrons for reduction during radical cofactor maturation in the catalytic small subunit. In Paramecium tetraurelia, this protein is Anamorsin homolog 2.